We begin with the raw amino-acid sequence, 319 residues long: tRNA dimethylallyltransferase (319 aa).

Residue 11–18 (GPTCSGKS) coordinates ATP. 13–18 (TCSGKS) is a substrate binding site. Interaction with substrate tRNA regions lie at residues 36-39 (DSMQ) and 160-164 (QRIAR).

This sequence belongs to the IPP transferase family. As to quaternary structure, monomer. Mg(2+) serves as cofactor.

It catalyses the reaction adenosine(37) in tRNA + dimethylallyl diphosphate = N(6)-dimethylallyladenosine(37) in tRNA + diphosphate. Functionally, catalyzes the transfer of a dimethylallyl group onto the adenine at position 37 in tRNAs that read codons beginning with uridine, leading to the formation of N6-(dimethylallyl)adenosine (i(6)A). The chain is tRNA dimethylallyltransferase from Granulibacter bethesdensis (strain ATCC BAA-1260 / CGDNIH1).